Here is a 280-residue protein sequence, read N- to C-terminus: Probable S-methyl-5'-thioinosine phosphorylase (280 aa).

Phosphate contacts are provided by residues Thr-8 and 50 to 51 (RH). Substrate is bound at residue Met-175. A phosphate-binding site is contributed by Thr-176. 199–201 (NYA) lines the substrate pocket.

The protein belongs to the PNP/MTAP phosphorylase family. MTAP subfamily. In terms of assembly, homotrimer.

The catalysed reaction is S-methyl-5'-thioinosine + phosphate = 5-(methylsulfanyl)-alpha-D-ribose 1-phosphate + hypoxanthine. It functions in the pathway purine metabolism; purine nucleoside salvage. Its function is as follows. Catalyzes the reversible phosphorylation of S-methyl-5'-thioinosine (MTI) to hypoxanthine and 5-methylthioribose-1-phosphate. Involved in the breakdown of S-methyl-5'-thioadenosine (MTA), a major by-product of polyamine biosynthesis. Catabolism of (MTA) occurs via deamination to MTI and phosphorolysis to hypoxanthine. This is Probable S-methyl-5'-thioinosine phosphorylase from Methanothermobacter thermautotrophicus (strain ATCC 29096 / DSM 1053 / JCM 10044 / NBRC 100330 / Delta H) (Methanobacterium thermoautotrophicum).